The sequence spans 402 residues: WAT1-related protein At5g07050 (402 aa).

10 helical membrane passes run 20–40, 48–68, 74–94, 109–129, 149–169, 196–216, 229–249, 266–286, 293–313, and 318–338; these read FAMI…KISL, VLVV…AFFF, PKIT…GPVI, TFSC…AVLF, VVTV…VELF, FLKG…LFVL, LSLT…VTFV, LAAA…QGIV, VFAT…GSFV, and IFLG…AVLW. 2 consecutive EamA domains span residues 29 to 159 and 208 to 337; these read YAGM…MLMT and LAWA…YAVL.

This sequence belongs to the drug/metabolite transporter (DMT) superfamily. Plant drug/metabolite exporter (P-DME) (TC 2.A.7.4) family.

The protein resides in the membrane. This Arabidopsis thaliana (Mouse-ear cress) protein is WAT1-related protein At5g07050.